Reading from the N-terminus, the 219-residue chain is MDYDEKRERLAERLRQELNLSRKVYEAIRKVPRHLFVPESYKNEAYVDTPLPIGYGQTISAPHMVAIMCELLDLREGDKVLEVGTGCGYHAAVTAEIVGKSGKVISIEYIPELAERARAILKALGYDNVEVIVGDGSKGYEKEAPYDKIYVTAAAPDIPKPLIEQLKPRGRMVIPVGDSVQWLIIVEKDESGNVRKKNWGSVRFVPLRGEYGFKSVRYD.

Ser60 is a catalytic residue.

The protein belongs to the methyltransferase superfamily. L-isoaspartyl/D-aspartyl protein methyltransferase family.

It is found in the cytoplasm. It catalyses the reaction [protein]-L-isoaspartate + S-adenosyl-L-methionine = [protein]-L-isoaspartate alpha-methyl ester + S-adenosyl-L-homocysteine. Functionally, catalyzes the methyl esterification of L-isoaspartyl residues in peptides and proteins that result from spontaneous decomposition of normal L-aspartyl and L-asparaginyl residues. It plays a role in the repair and/or degradation of damaged proteins. This Archaeoglobus fulgidus (strain ATCC 49558 / DSM 4304 / JCM 9628 / NBRC 100126 / VC-16) protein is Protein-L-isoaspartate O-methyltransferase 2 (pcm2).